The primary structure comprises 68 residues: MAFLKKSLFLVLFLGLVSLSICEEKERETKEEENEQEDDNREEKRFLSLIPHVISAIPHVVNALSNLG.

The first 22 residues, 1 to 22 (MAFLKKSLFLVLFLGLVSLSIC), serve as a signal peptide directing secretion. The propeptide occupies 23 to 45 (EEKERETKEEENEQEDDNREEKR). Leucine 67 is subject to Leucine amide.

Expressed by the skin glands.

It is found in the secreted. Its function is as follows. Weak cationic amphipathic alpha-helical antimicrobial peptide with weak activity against Gram-positive and Gram-negative bacteria and fungi. Has been tested against E.coli (MIC&gt;217.69 uM), S.aureus (MIC&gt;217.69 uM), K.pneumoniae (MIC&gt;189.00 uM) and C.albicans (MIC&gt;217.69 uM). Shows a moderate hemolytic activity. The chain is Phylloseptin-SP1 from Agalychnis spurrelli (Gliding leaf frog).